Reading from the N-terminus, the 99-residue chain is Large ribosomal subunit protein eL21 (99 aa).

Belongs to the eukaryotic ribosomal protein eL21 family.

This chain is Large ribosomal subunit protein eL21, found in Pyrobaculum calidifontis (strain DSM 21063 / JCM 11548 / VA1).